We begin with the raw amino-acid sequence, 161 residues long: Protein-export protein SecB (161 aa).

This sequence belongs to the SecB family. As to quaternary structure, homotetramer, a dimer of dimers. One homotetramer interacts with 1 SecA dimer.

The protein localises to the cytoplasm. In terms of biological role, one of the proteins required for the normal export of preproteins out of the cell cytoplasm. It is a molecular chaperone that binds to a subset of precursor proteins, maintaining them in a translocation-competent state. It also specifically binds to its receptor SecA. The chain is Protein-export protein SecB from Shewanella baltica (strain OS155 / ATCC BAA-1091).